We begin with the raw amino-acid sequence, 84 residues long: ATP synthase subunit c (84 aa).

A run of 2 helical transmembrane segments spans residues 10 to 30 and 53 to 73; these read IAVA…FAIL and FIVA…ALFF.

The protein belongs to the ATPase C chain family. F-type ATPases have 2 components, F(1) - the catalytic core - and F(0) - the membrane proton channel. F(1) has five subunits: alpha(3), beta(3), gamma(1), delta(1), epsilon(1). F(0) has three main subunits: a(1), b(2) and c(10-14). The alpha and beta chains form an alternating ring which encloses part of the gamma chain. F(1) is attached to F(0) by a central stalk formed by the gamma and epsilon chains, while a peripheral stalk is formed by the delta and b chains.

The protein resides in the cell inner membrane. In terms of biological role, f(1)F(0) ATP synthase produces ATP from ADP in the presence of a proton or sodium gradient. F-type ATPases consist of two structural domains, F(1) containing the extramembraneous catalytic core and F(0) containing the membrane proton channel, linked together by a central stalk and a peripheral stalk. During catalysis, ATP synthesis in the catalytic domain of F(1) is coupled via a rotary mechanism of the central stalk subunits to proton translocation. Key component of the F(0) channel; it plays a direct role in translocation across the membrane. A homomeric c-ring of between 10-14 subunits forms the central stalk rotor element with the F(1) delta and epsilon subunits. This chain is ATP synthase subunit c, found in Shewanella putrefaciens (strain CN-32 / ATCC BAA-453).